Consider the following 223-residue polypeptide: Urease accessory protein UreF (223 aa).

Belongs to the UreF family. In terms of assembly, ureD, UreF and UreG form a complex that acts as a GTP-hydrolysis-dependent molecular chaperone, activating the urease apoprotein by helping to assemble the nickel containing metallocenter of UreC. The UreE protein probably delivers the nickel.

Its subcellular location is the cytoplasm. Functionally, required for maturation of urease via the functional incorporation of the urease nickel metallocenter. This is Urease accessory protein UreF from Pseudomonas aeruginosa (strain LESB58).